Consider the following 61-residue polypeptide: uncharacterized protein (61 aa).

The N-terminal stretch at 1–30 is a signal peptide; the sequence is MDVEVANMAAKLRVRGLKLPNAIVVSTAIL.

This is an uncharacterized protein from Archaeoglobus fulgidus (strain ATCC 49558 / DSM 4304 / JCM 9628 / NBRC 100126 / VC-16).